Here is a 536-residue protein sequence, read N- to C-terminus: SNW domain-containing protein 1 (536 aa).

The segment at 1 to 46 is disordered; the sequence is MALTSFLPAPTQLSQDQLEAEEKARSQRSRQTSLVSSRREPPPYGY. Alanine 2 bears the N-acetylalanine mark. Phosphoserine is present on serine 14. A Glycyl lysine isopeptide (Lys-Gly) (interchain with G-Cter in SUMO2) cross-link involves residue lysine 23. The tract at residues 59-79 is interaction with PPIL1; sequence GDGGAFPEIHVAQYPLDMGRK. Glycyl lysine isopeptide (Lys-Gly) (interchain with G-Cter in SUMO2) cross-links involve residues lysine 81, lysine 97, lysine 115, lysine 122, lysine 141, lysine 158, and lysine 170. The segment at 174 to 339 is SNW; that stretch reads AQYIRYTPSQ…KARERRAGIK (166 aa). A phosphoserine mark is found at serine 182 and serine 190. Lysine 193 participates in a covalent cross-link: Glycyl lysine isopeptide (Lys-Gly) (interchain with G-Cter in SUMO2). Residues 209-233 form a disordered region; the sequence is PPRFKINKKIPRGPPSPPAPVMHSP. Residues serine 224, serine 232, and serine 234 each carry the phosphoserine modification. Residues lysine 240, lysine 258, lysine 286, lysine 339, lysine 344, lysine 416, and lysine 441 each participate in a glycyl lysine isopeptide (Lys-Gly) (interchain with G-Cter in SUMO2) cross-link. Residues 311–386 form a disordered region; the sequence is KMAQKEKEKH…RSKLQRNENR (76 aa). Residue serine 446 is modified to Phosphoserine. Lysine 452 is covalently cross-linked (Glycyl lysine isopeptide (Lys-Gly) (interchain with G-Cter in SUMO2)). Basic and acidic residues-rich tracts occupy residues 470-489 and 503-530; these read NRFVPDKEFSGSDRRQRGRE and KFLEEAKQHGGSKRPSDSSRPKEHEHEG. Residues 470–536 are disordered; the sequence is NRFVPDKEFS…EHEGKKRRKE (67 aa). Residues serine 479 and serine 481 each carry the phosphoserine modification. Residue lysine 509 forms a Glycyl lysine isopeptide (Lys-Gly) (interchain with G-Cter in SUMO2) linkage.

Belongs to the SNW family. In terms of assembly, identified in the spliceosome C complex. Associates with U4/U6-U5 tri-small nuclear ribonucleoproteins (U4/U6-U5 tri-snRNPs). Component of the minor spliceosome, which splices U12-type introns. Interacts with SKI, SMAD2,SMAD3, RBPJ, RB1, PABPN1, MAGEA1, SIRT1, FOXN3, U2AF2, DAXX and ATP1B4. Interacts with PPIL1. Interacts with VDR and RXRA; preferentially associates with VDR:RXRA heterodimers. Interacts with NCOR2. Interacts with MAML1. Interacts with NOTCH1 NICD; the interaction involves multimerized NOTCH1 NICD. Forms a complex with NOTCH1 NICD and MAML1; the association is dissociated by RBPJ. Associates with positive transcription elongation factor b (P-TEFb). Component of the SNARP complex which consists at least of SNIP1, SNW1, THRAP3, BCLAF1 and PNN. As to quaternary structure, (Microbial infection) Interacts with human papillomavirus type-16 (HPV16) E7 protein. (Microbial infection) Interacts with EBV EBNA2; EBNA2 competes with NCOR2 for interaction with SNW1.

The protein resides in the nucleus. In terms of biological role, involved in pre-mRNA splicing as component of the spliceosome. As a component of the minor spliceosome, involved in the splicing of U12-type introns in pre-mRNAs. Required for the specific splicing of CDKN1A pre-mRNA; the function probably involves the recruitment of U2AF2 to the mRNA. May recruit PPIL1 to the spliceosome. May be involved in cyclin-D1/CCND1 mRNA stability through the SNARP complex which associates with both the 3'end of the CCND1 gene and its mRNA. Involved in transcriptional regulation. Modulates TGF-beta-mediated transcription via association with SMAD proteins, MYOD1-mediated transcription via association with PABPN1, RB1-mediated transcriptional repression, and retinoid-X receptor (RXR)- and vitamin D receptor (VDR)-dependent gene transcription in a cell line-specific manner probably involving coactivators NCOA1 and GRIP1. Is involved in NOTCH1-mediated transcriptional activation. Binds to multimerized forms of Notch intracellular domain (NICD) and is proposed to recruit transcriptional coactivators such as MAML1 to form an intermediate preactivation complex which associates with DNA-bound CBF-1/RBPJ to form a transcriptional activation complex by releasing SNW1 and redundant NOTCH1 NICD. Its function is as follows. (Microbial infection) Is recruited by HIV-1 Tat to Tat:P-TEFb:TAR RNA complexes and is involved in Tat transcription by recruitment of MYC, MEN1 and TRRAP to the HIV promoter. (Microbial infection) Proposed to be involved in transcriptional activation by EBV EBNA2 of CBF-1/RBPJ-repressed promoters. The chain is SNW domain-containing protein 1 (SNW1) from Homo sapiens (Human).